Consider the following 422-residue polypeptide: MIDLRALREDPDRLRASQRARGEDESVVDRLLDLDSRHRAALARFETLRAEQKSVGKSVSRASAEEREALLNRAKSLASEVKSAEAEAEALSDELTTLLRSVPNVVESDAPVGGVDDFVVVEEVGTPRQFDFTPRDHLELGEMLGAIDTERGAKVSGARFYFLTGVGALLELGLLNLAMQRAVANGFTPMIPPVLVKPETMDGTGFLGEHAAEVYHLPADDLYLVGTSEVPLAGYHANEILPADALPTRYIGWSSCFRREAGSYGKDTRGIIRVHQFNKVEMFVYAHPDEAHEEHLRLLAWEREMLDLIEVPYRVVDIAAGDLGTSAARKYDCEAWLPSQGRYRELTSTSNCTEFQSRRLNIRYRDTDGKPRFVATLNGTLATTRWIVAILENHQQEDGSVVVPEALRPFVGQDVLHPIAKK.

227–229 (TSE) is an L-serine binding site. Residues 258–260 (RRE) and V274 contribute to the ATP site. E281 contacts L-serine. 345-348 (ELTS) contacts ATP. T380 lines the L-serine pocket.

Belongs to the class-II aminoacyl-tRNA synthetase family. Type-1 seryl-tRNA synthetase subfamily. Homodimer. The tRNA molecule binds across the dimer.

Its subcellular location is the cytoplasm. The enzyme catalyses tRNA(Ser) + L-serine + ATP = L-seryl-tRNA(Ser) + AMP + diphosphate + H(+). The catalysed reaction is tRNA(Sec) + L-serine + ATP = L-seryl-tRNA(Sec) + AMP + diphosphate + H(+). Its pathway is aminoacyl-tRNA biosynthesis; selenocysteinyl-tRNA(Sec) biosynthesis; L-seryl-tRNA(Sec) from L-serine and tRNA(Sec): step 1/1. Its function is as follows. Catalyzes the attachment of serine to tRNA(Ser). Is also able to aminoacylate tRNA(Sec) with serine, to form the misacylated tRNA L-seryl-tRNA(Sec), which will be further converted into selenocysteinyl-tRNA(Sec). The chain is Serine--tRNA ligase from Thermobifida fusca (strain YX).